The primary structure comprises 269 residues: Tryptophan synthase alpha chain (269 aa).

Residues Glu49 and Asp60 each act as proton acceptor in the active site.

Belongs to the TrpA family. As to quaternary structure, tetramer of two alpha and two beta chains.

The enzyme catalyses (1S,2R)-1-C-(indol-3-yl)glycerol 3-phosphate + L-serine = D-glyceraldehyde 3-phosphate + L-tryptophan + H2O. Its pathway is amino-acid biosynthesis; L-tryptophan biosynthesis; L-tryptophan from chorismate: step 5/5. Its function is as follows. The alpha subunit is responsible for the aldol cleavage of indoleglycerol phosphate to indole and glyceraldehyde 3-phosphate. The protein is Tryptophan synthase alpha chain of Paramagnetospirillum magneticum (strain ATCC 700264 / AMB-1) (Magnetospirillum magneticum).